A 460-amino-acid polypeptide reads, in one-letter code: Serine--tRNA ligase (460 aa).

Residue 242–244 (TAE) coordinates L-serine. ATP contacts are provided by residues 273-275 (RRE) and valine 289. Glutamate 296 lines the L-serine pocket. 369–372 (EVSS) is a binding site for ATP. Position 405 (serine 405) interacts with L-serine.

This sequence belongs to the class-II aminoacyl-tRNA synthetase family. Type-1 seryl-tRNA synthetase subfamily. In terms of assembly, homodimer. The tRNA molecule binds across the dimer.

Its subcellular location is the cytoplasm. The enzyme catalyses tRNA(Ser) + L-serine + ATP = L-seryl-tRNA(Ser) + AMP + diphosphate + H(+). The catalysed reaction is tRNA(Sec) + L-serine + ATP = L-seryl-tRNA(Sec) + AMP + diphosphate + H(+). The protein operates within aminoacyl-tRNA biosynthesis; selenocysteinyl-tRNA(Sec) biosynthesis; L-seryl-tRNA(Sec) from L-serine and tRNA(Sec): step 1/1. Its function is as follows. Catalyzes the attachment of serine to tRNA(Ser). Is also able to aminoacylate tRNA(Sec) with serine, to form the misacylated tRNA L-seryl-tRNA(Sec), which will be further converted into selenocysteinyl-tRNA(Sec). The protein is Serine--tRNA ligase of Haloquadratum walsbyi (strain DSM 16790 / HBSQ001).